A 117-amino-acid polypeptide reads, in one-letter code: Heat shock 70 kDa protein 1-like (117 aa).

ATP is bound by residues 72-75 (ERAK) and 84-87 (GSTR).

It belongs to the heat shock protein 70 family. Interacts with PRKN. In terms of tissue distribution, detected at higher levels in caput epididymal spermatazoa than in cauda epididymal spermatazoa (at protein level).

Molecular chaperone implicated in a wide variety of cellular processes, including protection of the proteome from stress, folding and transport of newly synthesized polypeptides, activation of proteolysis of misfolded proteins and the formation and dissociation of protein complexes. Plays a pivotal role in the protein quality control system, ensuring the correct folding of proteins, the re-folding of misfolded proteins and controlling the targeting of proteins for subsequent degradation. This is achieved through cycles of ATP binding, ATP hydrolysis and ADP release, mediated by co-chaperones. The affinity for polypeptides is regulated by its nucleotide bound state. In the ATP-bound form, it has a low affinity for substrate proteins. However, upon hydrolysis of the ATP to ADP, it undergoes a conformational change that increases its affinity for substrate proteins. It goes through repeated cycles of ATP hydrolysis and nucleotide exchange, which permits cycles of substrate binding and release. Positive regulator of PRKN translocation to damaged mitochondria. This chain is Heat shock 70 kDa protein 1-like, found in Mesocricetus auratus (Golden hamster).